The sequence spans 311 residues: Olfactory receptor 8B8 (311 aa).

The Extracellular segment spans residues 1 to 25 (MAAENSSFVTQFILAGLTDQPGVQI). The N-linked (GlcNAc...) asparagine glycan is linked to N5. A helical membrane pass occupies residues 26 to 46 (PLFFLFLGFYVVTVVGNLGLI). The Cytoplasmic segment spans residues 47–54 (TLIRLNSH). The helical transmembrane segment at 55 to 75 (LHTPMYFFLYNLSFIDFCYSS) threads the bilayer. Topologically, residues 76 to 99 (VITPKMLMSFVLKKNSISYAGCMT) are extracellular. Residues C97 and C189 are joined by a disulfide bond. The chain crosses the membrane as a helical span at residues 100-120 (QLFFFLFFVVSESFILSAMAY). Topologically, residues 121 to 139 (DRYVAICNPLLYMVTMSPQ) are cytoplasmic. The helical transmembrane segment at 140–160 (VCFLLLLGVYGMGFAGAMAHT) threads the bilayer. The Extracellular portion of the chain corresponds to 161 to 197 (ACMMGVTFCANNLVNHYMCDILPLLECACTSTYVNEL). A helical transmembrane segment spans residues 198–217 (VVFVVVGIDIGVPTVTIFIS). Over 218–237 (YALILSSIFHIDSTEGRSKA) the chain is Cytoplasmic. Residues 238-258 (FSTCSSHIIAVSLFFGSGAFM) form a helical membrane-spanning segment. Over 259–271 (YLKPFSLLAMNQG) the chain is Extracellular. A helical transmembrane segment spans residues 272 to 292 (KVSSLFYTTVVPMLNPLIYSL). Residues 293–311 (RNKDVKVALKKILNKNAFS) are Cytoplasmic-facing.

The protein belongs to the G-protein coupled receptor 1 family. As to expression, expressed in the tongue and testis.

The protein localises to the cell membrane. Its function is as follows. Odorant receptor (Potential). May be involved in taste perception. This is Olfactory receptor 8B8 from Homo sapiens (Human).